Consider the following 61-residue polypeptide: Small ribosomal subunit protein uS14 (61 aa).

Zn(2+) contacts are provided by C24, C27, C40, and C43.

Belongs to the universal ribosomal protein uS14 family. Zinc-binding uS14 subfamily. As to quaternary structure, part of the 30S ribosomal subunit. Contacts proteins S3 and S10. Zn(2+) is required as a cofactor.

In terms of biological role, binds 16S rRNA, required for the assembly of 30S particles and may also be responsible for determining the conformation of the 16S rRNA at the A site. The protein is Small ribosomal subunit protein uS14 of Petrotoga mobilis (strain DSM 10674 / SJ95).